We begin with the raw amino-acid sequence, 314 residues long: Cytochrome f (314 aa).

An N-terminal signal peptide occupies residues 1–29 (MTRSISISVLIISVLIMIYVITRTSISNA). Tyr-30, Cys-50, Cys-53, and His-54 together coordinate heme. A helical membrane pass occupies residues 280–300 (VQGLLFFLASVILAQIFLVLK).

The protein belongs to the cytochrome f family. As to quaternary structure, the 4 large subunits of the cytochrome b6-f complex are cytochrome b6, subunit IV (17 kDa polypeptide, petD), cytochrome f and the Rieske protein, while the 4 small subunits are PetG, PetL, PetM and PetN. The complex functions as a dimer. Heme serves as cofactor.

Its subcellular location is the plastid. The protein resides in the chloroplast thylakoid membrane. Component of the cytochrome b6-f complex, which mediates electron transfer between photosystem II (PSII) and photosystem I (PSI), cyclic electron flow around PSI, and state transitions. The chain is Cytochrome f from Illicium oligandrum (Star anise).